A 387-amino-acid polypeptide reads, in one-letter code: Xylose isomerase (387 aa).

Catalysis depends on residues His-53 and Asp-56. Glu-180, Glu-216, His-219, Asp-244, Asp-254, Asp-256, and Asp-286 together coordinate Mg(2+).

Belongs to the xylose isomerase family. As to quaternary structure, homotetramer. Requires Mg(2+) as cofactor.

The protein resides in the cytoplasm. It catalyses the reaction alpha-D-xylose = alpha-D-xylulofuranose. This Thermus caldophilus protein is Xylose isomerase (xylA).